Here is a 559-residue protein sequence, read N- to C-terminus: Urocanate hydratase (559 aa).

Residues 50–51 (GG), glutamine 128, 174–176 (GMG), aspartate 194, arginine 199, 240–241 (NA), 261–265 (QTSAH), 271–272 (YI), and tyrosine 320 each bind NAD(+). The active site involves cysteine 408. NAD(+) is bound at residue glycine 490.

The protein belongs to the urocanase family. Requires NAD(+) as cofactor.

The protein resides in the cytoplasm. The catalysed reaction is 4-imidazolone-5-propanoate = trans-urocanate + H2O. It functions in the pathway amino-acid degradation; L-histidine degradation into L-glutamate; N-formimidoyl-L-glutamate from L-histidine: step 2/3. In terms of biological role, catalyzes the conversion of urocanate to 4-imidazolone-5-propionate. The polypeptide is Urocanate hydratase (Halalkalibacterium halodurans (strain ATCC BAA-125 / DSM 18197 / FERM 7344 / JCM 9153 / C-125) (Bacillus halodurans)).